The primary structure comprises 388 residues: Succinate--CoA ligase [ADP-forming] subunit beta (388 aa).

The ATP-grasp domain maps to 9–243 (KQLFHRYGIP…ESQLAPLEVR (235 aa)). ATP contacts are provided by residues lysine 45, 52 to 54 (GRG), glutamate 98, valine 101, and glutamate 106. 2 residues coordinate Mg(2+): asparagine 198 and aspartate 212. Substrate contacts are provided by residues asparagine 263 and 320 to 322 (GIM).

This sequence belongs to the succinate/malate CoA ligase beta subunit family. In terms of assembly, heterotetramer of two alpha and two beta subunits. The cofactor is Mg(2+).

The enzyme catalyses succinate + ATP + CoA = succinyl-CoA + ADP + phosphate. It carries out the reaction GTP + succinate + CoA = succinyl-CoA + GDP + phosphate. The protein operates within carbohydrate metabolism; tricarboxylic acid cycle; succinate from succinyl-CoA (ligase route): step 1/1. Succinyl-CoA synthetase functions in the citric acid cycle (TCA), coupling the hydrolysis of succinyl-CoA to the synthesis of either ATP or GTP and thus represents the only step of substrate-level phosphorylation in the TCA. The beta subunit provides nucleotide specificity of the enzyme and binds the substrate succinate, while the binding sites for coenzyme A and phosphate are found in the alpha subunit. The polypeptide is Succinate--CoA ligase [ADP-forming] subunit beta (Syntrophotalea carbinolica (strain DSM 2380 / NBRC 103641 / GraBd1) (Pelobacter carbinolicus)).